Reading from the N-terminus, the 498-residue chain is ATP synthase subunit beta, chloroplastic (498 aa).

172-179 (GGAGVGKT) contributes to the ATP binding site.

The protein belongs to the ATPase alpha/beta chains family. As to quaternary structure, F-type ATPases have 2 components, CF(1) - the catalytic core - and CF(0) - the membrane proton channel. CF(1) has five subunits: alpha(3), beta(3), gamma(1), delta(1), epsilon(1). CF(0) has four main subunits: a(1), b(1), b'(1) and c(9-12).

The protein resides in the plastid. It is found in the chloroplast thylakoid membrane. The catalysed reaction is ATP + H2O + 4 H(+)(in) = ADP + phosphate + 5 H(+)(out). Produces ATP from ADP in the presence of a proton gradient across the membrane. The catalytic sites are hosted primarily by the beta subunits. The protein is ATP synthase subunit beta, chloroplastic of Calamus usitatus (Palm tree).